A 798-amino-acid polypeptide reads, in one-letter code: Integrin beta-1-B (798 aa).

The signal sequence occupies residues M1 to A21. Residues Q22 to P727 are Extracellular-facing. Positions E27–P77 constitute a PSI domain. 28 disulfides stabilise this stretch: C28-C46, C36-C464, C39-C65, C49-C76, C206-C212, C260-C300, C400-C414, C434-C462, C466-C486, C477-C489, C491-C500, C502-C533, C516-C531, C525-C536, C538-C553, C555-C576, C560-C574, C568-C579, C581-C590, C592-C615, C599-C613, C607-C618, C620-C630, C633-C636, C640-C691, C646-C665, C649-C661, and C699-C723. Positions P77 to D106 are disordered. N-linked (GlcNAc...) asparagine glycosylation is found at N109 and N131. In terms of domain architecture, VWFA spans D139 to L377. Mg(2+) contacts are provided by S151 and S153. Positions 153, 156, 157, and 188 each coordinate Ca(2+). N-linked (GlcNAc...) asparagine glycosylation is found at N211 and N223. Ca(2+) is bound by residues N243, D245, P247, and E248. E248 contacts Mg(2+). N-linked (GlcNAc...) asparagine glycans are attached at residues N268 and N362. N-linked (GlcNAc...) asparagine glycosylation is present at N416. I-EGF domains are found at residues C466–E501, C502–E554, C555–D591, and C592–E631. The N-linked (GlcNAc...) asparagine glycan is linked to N481. N520 is a glycosylation site (N-linked (GlcNAc...) asparagine). Residue N584 is glycosylated (N-linked (GlcNAc...) asparagine). A glycan (N-linked (GlcNAc...) asparagine) is linked at N669. Residues D728–W751 form a helical membrane-spanning segment. The Cytoplasmic segment spans residues K752–K798. Y783 carries the post-translational modification Phosphotyrosine.

Belongs to the integrin beta chain family. In terms of assembly, heterodimer of an alpha and a beta subunit.

Its subcellular location is the cell membrane. It localises to the cell projection. It is found in the invadopodium membrane. The protein resides in the ruffle membrane. The protein localises to the melanosome. Its subcellular location is the cleavage furrow. It localises to the lamellipodium. It is found in the ruffle. Its function is as follows. Beta integrins associate with alpha subunits to form receptor complexes that recognize the sequence R-G-D in a wide array of ligands. May be involved in osteoblast compaction. May play role in myoblast differentiation and fusion during skeletal myogenesis. In Xenopus laevis (African clawed frog), this protein is Integrin beta-1-B (itgb1-b).